Consider the following 261-residue polypeptide: Esterase citA (261 aa).

Catalysis depends on charge relay system residues serine 122, aspartate 207, and histidine 235.

The protein belongs to the LovG family.

It functions in the pathway mycotoxin biosynthesis. Functionally, non-reducing polyketide synthase; part of the gene cluster that mediates the biosynthesis of the mycotoxin citrinin, a hepato-nephrotoxic compound to humans due to inhibition of respiration complex III. The pathway begins with the synthesis of a keto-aldehyde intermediate by the citrinin PKS (pksCT also named citS) from successive condensations of 4 malonyl-CoA units, presumably with a simple acetyl-CoA starter unit. Release of the keto-aldehyde intermediate is consistent with the presence of the C-terminal reductive release domain. CitA collaborates with citS by catalyzing the hydrolysis of ACP-bound acyl intermediates to free the ACP from stalled intermediates. CitB then catalyzes the oxidation of the C-12 methyl of the ketone intermediate to an alcohol intermediate which is further oxidized by the oxidoreductase citC to produce a bisaldehyde intermediate. The fourth catalytic step is catalyzed by the citD aldehyde dehydrogenase. The final transformation is the reduction of C-3 by citE to provide the chemically stable citrinin nucleus. CitE appears highly selective for its substrate as its presence in any context other than a full complement of citS and citA-D does not result in observable new compounds. This Monascus ruber (Mold) protein is Esterase citA.